A 467-amino-acid chain; its full sequence is Uronate isomerase (467 aa).

The protein belongs to the metallo-dependent hydrolases superfamily. Uronate isomerase family.

The enzyme catalyses D-glucuronate = D-fructuronate. The catalysed reaction is aldehydo-D-galacturonate = keto-D-tagaturonate. It functions in the pathway carbohydrate metabolism; pentose and glucuronate interconversion. The chain is Uronate isomerase from Flavobacterium johnsoniae (strain ATCC 17061 / DSM 2064 / JCM 8514 / BCRC 14874 / CCUG 350202 / NBRC 14942 / NCIMB 11054 / UW101) (Cytophaga johnsonae).